The primary structure comprises 591 residues: Probable acetolactate synthase large subunit (591 aa).

Residue E47 participates in thiamine diphosphate binding. FAD is bound by residues R149, 258–279 (HGTK…IGCR), and 301–320 (DIDP…IVGD). The thiamine pyrophosphate binding stretch occupies residues 396-476 (QNQMWMAHFF…VVICIFDNRT (81 aa)). Residues D447 and N474 each contribute to the Mg(2+) site.

The protein belongs to the TPP enzyme family. As to quaternary structure, dimer of large and small chains. Mg(2+) is required as a cofactor. Thiamine diphosphate serves as cofactor.

The enzyme catalyses 2 pyruvate + H(+) = (2S)-2-acetolactate + CO2. The protein operates within amino-acid biosynthesis; L-isoleucine biosynthesis; L-isoleucine from 2-oxobutanoate: step 1/4. It functions in the pathway amino-acid biosynthesis; L-valine biosynthesis; L-valine from pyruvate: step 1/4. In Methanocaldococcus jannaschii (strain ATCC 43067 / DSM 2661 / JAL-1 / JCM 10045 / NBRC 100440) (Methanococcus jannaschii), this protein is Probable acetolactate synthase large subunit (ilvB).